The following is a 254-amino-acid chain: Photosystem II 22 kDa protein 2, chloroplastic (254 aa).

Residues 1-38 (MALQQSMAMPMMVVSDLGTAPRSSPMVQLQRMKKHLVV) constitute a chloroplast transit peptide. 2 consecutive repeat copies span residues 42-148 (FKSR…FVDD) and 149-253 (ATGL…DNDD). 4 helical membrane-spanning segments follow: residues 86 to 106 (VAML…KGIL), 120 to 140 (AEPL…GALG), 184 to 204 (LFVG…EIIT), and 219 to 239 (PINE…FAAI).

Belongs to the ELIP/psbS family.

The protein localises to the plastid. The protein resides in the chloroplast thylakoid membrane. Functionally, involved in high light-mediated energy-dependent nonphotochemical quenching (NPQ, qE) and thermal dissipation (TD) thus regulating energy conversion in photosystem II and protecting from photoinhibition. Also seems to regulate quantum yield of electron transport in fluctuating light conditions. The sequence is that of Photosystem II 22 kDa protein 2, chloroplastic from Oryza sativa subsp. japonica (Rice).